A 101-amino-acid polypeptide reads, in one-letter code: UPF0060 membrane protein ACIAD1364 (101 aa).

A run of 3 helical transmembrane segments spans residues 24-44 (WLWL…TLHP), 50-70 (IYAA…RFID), and 79-99 (IWGG…PQGL).

It belongs to the UPF0060 family.

It localises to the cell inner membrane. The chain is UPF0060 membrane protein ACIAD1364 from Acinetobacter baylyi (strain ATCC 33305 / BD413 / ADP1).